The primary structure comprises 399 residues: Nicotinate phosphoribosyltransferase (399 aa).

H217 carries the phosphohistidine; by autocatalysis modification.

This sequence belongs to the NAPRTase family. Transiently phosphorylated on a His residue during the reaction cycle. Phosphorylation strongly increases the affinity for substrates and increases the rate of nicotinate D-ribonucleotide production. Dephosphorylation regenerates the low-affinity form of the enzyme, leading to product release.

The enzyme catalyses nicotinate + 5-phospho-alpha-D-ribose 1-diphosphate + ATP + H2O = nicotinate beta-D-ribonucleotide + ADP + phosphate + diphosphate. Its pathway is cofactor biosynthesis; NAD(+) biosynthesis; nicotinate D-ribonucleotide from nicotinate: step 1/1. In terms of biological role, catalyzes the synthesis of beta-nicotinate D-ribonucleotide from nicotinate and 5-phospho-D-ribose 1-phosphate at the expense of ATP. The chain is Nicotinate phosphoribosyltransferase from Burkholderia mallei (strain ATCC 23344).